A 323-amino-acid polypeptide reads, in one-letter code: Synaptonemal complex central element protein 1 (323 aa).

The span at 1-10 (MAGRPGSSNA) shows a compositional bias: polar residues. Disordered regions lie at residues 1 to 31 (MAGR…SSQK) and 294 to 323 (KQEE…PSTK). 2 stretches are compositionally biased toward basic and acidic residues: residues 20–31 (DEARGQAESSQK) and 313–323 (SEEKDQEPSTK). Residues 25-290 (QAESSQKIED…EKLGVQVLAQ (266 aa)) are a coiled coil.

It belongs to the SYCE family. As to quaternary structure, homodimer. Found in a complex with SYCP1 and SYCE2. Interacts with SYCP1, SYCE2 and SYCE3. Interacts with SIX6OS1.

It localises to the nucleus. It is found in the chromosome. Major component of the transverse central element of synaptonemal complexes (SCS), formed between homologous chromosomes during meiotic prophase. Requires SYCP1 in order to be incorporated into the central element. May have a role in the synaptonemal complex assembly, stabilization and recombination. In Bos taurus (Bovine), this protein is Synaptonemal complex central element protein 1 (SYCE1).